Reading from the N-terminus, the 350-residue chain is Protein Wnt-2 (350 aa).

Residues 1 to 25 (MNFLPNGICFYLSVAICWFSSRVDA) form the signal peptide. 11 disulfides stabilise this stretch: cysteine 74-cysteine 85, cysteine 125-cysteine 133, cysteine 135-cysteine 155, cysteine 204-cysteine 218, cysteine 206-cysteine 213, cysteine 276-cysteine 307, cysteine 292-cysteine 302, cysteine 306-cysteine 346, cysteine 322-cysteine 337, cysteine 324-cysteine 334, and cysteine 329-cysteine 330. N-linked (GlcNAc...) asparagine glycosylation is present at asparagine 132. The O-palmitoleoyl serine; by PORCN moiety is linked to residue serine 210. Residue asparagine 293 is glycosylated (N-linked (GlcNAc...) asparagine).

Belongs to the Wnt family. Palmitoleoylation is required for efficient binding to frizzled receptors. Depalmitoleoylation leads to Wnt signaling pathway inhibition.

The protein resides in the secreted. It is found in the extracellular space. The protein localises to the extracellular matrix. Functionally, ligand for members of the frizzled family of seven transmembrane receptors. Functions in the canonical Wnt signaling pathway that results in activation of transcription factors of the TCF/LEF family. The polypeptide is Protein Wnt-2 (wnt2) (Danio rerio (Zebrafish)).